We begin with the raw amino-acid sequence, 859 residues long: DNA mismatch repair protein MutS (859 aa).

Residue 622–629 coordinates ATP; it reads GPNMGGKS.

The protein belongs to the DNA mismatch repair MutS family.

Functionally, this protein is involved in the repair of mismatches in DNA. It is possible that it carries out the mismatch recognition step. This protein has a weak ATPase activity. This Syntrophomonas wolfei subsp. wolfei (strain DSM 2245B / Goettingen) protein is DNA mismatch repair protein MutS.